Consider the following 346-residue polypeptide: Biotin synthase (346 aa).

One can recognise a Radical SAM core domain in the interval 38-256; the sequence is RQVQVSTLLS…IAVARIMMPT (219 aa). 3 residues coordinate [4Fe-4S] cluster: C53, C57, and C60. 4 residues coordinate [2Fe-2S] cluster: C97, C128, C188, and R260.

The protein belongs to the radical SAM superfamily. Biotin synthase family. As to quaternary structure, homodimer. [4Fe-4S] cluster is required as a cofactor. The cofactor is [2Fe-2S] cluster.

It catalyses the reaction (4R,5S)-dethiobiotin + (sulfur carrier)-SH + 2 reduced [2Fe-2S]-[ferredoxin] + 2 S-adenosyl-L-methionine = (sulfur carrier)-H + biotin + 2 5'-deoxyadenosine + 2 L-methionine + 2 oxidized [2Fe-2S]-[ferredoxin]. The protein operates within cofactor biosynthesis; biotin biosynthesis; biotin from 7,8-diaminononanoate: step 2/2. Functionally, catalyzes the conversion of dethiobiotin (DTB) to biotin by the insertion of a sulfur atom into dethiobiotin via a radical-based mechanism. This Escherichia fergusonii (strain ATCC 35469 / DSM 13698 / CCUG 18766 / IAM 14443 / JCM 21226 / LMG 7866 / NBRC 102419 / NCTC 12128 / CDC 0568-73) protein is Biotin synthase.